A 328-amino-acid chain; its full sequence is GTP cyclohydrolase MptA (328 aa).

The protein belongs to the GTP cyclohydrolase IV family. In terms of assembly, homodimer. Requires Fe(2+) as cofactor.

The enzyme catalyses GTP + H2O = 7,8-dihydroneopterin 2',3'-cyclic phosphate + formate + diphosphate + H(+). It functions in the pathway cofactor biosynthesis; 5,6,7,8-tetrahydromethanopterin biosynthesis. Converts GTP to 7,8-dihydro-D-neopterin 2',3'-cyclic phosphate, the first intermediate in the biosynthesis of coenzyme methanopterin. The polypeptide is GTP cyclohydrolase MptA (Methanospirillum hungatei JF-1 (strain ATCC 27890 / DSM 864 / NBRC 100397 / JF-1)).